The primary structure comprises 806 residues: Leucine--tRNA ligase (806 aa).

The short motif at 38 to 48 (PYPSGEIHMGH) is the 'HIGH' region element. Residues 572 to 576 (KMSKS) carry the 'KMSKS' region motif. Position 575 (K575) interacts with ATP.

It belongs to the class-I aminoacyl-tRNA synthetase family.

Its subcellular location is the cytoplasm. The enzyme catalyses tRNA(Leu) + L-leucine + ATP = L-leucyl-tRNA(Leu) + AMP + diphosphate. This Helicobacter pylori (strain HPAG1) protein is Leucine--tRNA ligase.